The sequence spans 268 residues: Bis(5'-nucleosyl)-tetraphosphatase, symmetrical (268 aa).

It belongs to the Ap4A hydrolase family.

The catalysed reaction is P(1),P(4)-bis(5'-adenosyl) tetraphosphate + H2O = 2 ADP + 2 H(+). In terms of biological role, hydrolyzes diadenosine 5',5'''-P1,P4-tetraphosphate to yield ADP. This chain is Bis(5'-nucleosyl)-tetraphosphatase, symmetrical, found in Vibrio parahaemolyticus serotype O3:K6 (strain RIMD 2210633).